A 697-amino-acid chain; its full sequence is MARLVAVCRDGEEEFPFERRQIPLYIDDTLTMVMEFPDNVLNLDGHQNNGAQLKQFIQRHGMLKQQDLSIAMVVTSREVLSALSQLVPCVGCRRSVERLFSQLVESGNPALEPLTVGPKGVLSVTRSCMTDAKKLYTLFYVHGSKLNDMIDAIPKSKKNKRCQLHSLDTHKPKPLGGCWMDVWELMSQECRDEVVLIDSSCLLETLETYLRKHRFCTDCKNKVLRAYNILIGELDCSKEKGYCAALYEGLRCCPHERHIHVCCETDFIAHLLGRAEPEFAGGRRERHAKTIDIAQEEVLTCLGIHLYERLHRIWQKLRAEEQTWQMLFYLGVDALRKSFEMTVEKVQGISRLEQLCEEFSEEERVRELKQEKKRQKRKNRRKNKCVCDIPTPLQTADEKEVSQEKETDFIENSSCKACGSTEDGNTCVEVIVTNENTSCTCPSSGNLLGSPKIKKGLSPHCNGSDCGYSSSMEGSETGSREGSDVACTEGICNHDEHGDDSCVHHCEDKEDDGDSCVECWANSEENDTKGKNKKKKKKSKILKCDEHIQKLGSCITDPGNRETSGNTMHTVFHRDKTKDTHPESCCSSEKGGQPLPWFEHRKNVPQFAEPTETLFGPDSGKGAKSLVELLDESECTSDEEIFISQDEIQSFMANNQSFYSNREQYRQHLKEKFNKYCRLNDHKRPICSGWLTTAGAN.

Phosphoserine is present on serine 360.

Interacts with GGN. As to expression, expressed in heart, brain, placenta, lung, liver, skeletal muscle, kidney and pancreas. Expressed more abundantly in heart, pancreas and skeletal muscle.

It is found in the cytoplasmic vesicle. May be involved in spermatogenesis. The polypeptide is Gametogenetin-binding protein 2 (GGNBP2) (Homo sapiens (Human)).